A 120-amino-acid polypeptide reads, in one-letter code: MSNLAVKYKQQAQEEVQIQTPPQQMVQPKAKAKITRIEKLLYVAFIGFLLYACVAFIGNKAGLYQVNVEAATIEQKIVQQQKENQELQAEVEKLSRYERIAEVAKKHGLEINANNVKGLK.

Over 1-36 the chain is Cytoplasmic; the sequence is MSNLAVKYKQQAQEEVQIQTPPQQMVQPKAKAKITR. The helical transmembrane segment at 37–57 threads the bilayer; that stretch reads IEKLLYVAFIGFLLYACVAFI. Over 58 to 120 the chain is Extracellular; it reads GNKAGLYQVN…INANNVKGLK (63 aa).

The protein belongs to the FtsL family.

Its subcellular location is the cell membrane. Its function is as follows. Essential cell division protein. The chain is Cell division protein FtsL from Bacillus anthracis.